A 749-amino-acid chain; its full sequence is Phosphate-regulating neutral endopeptidase PHEX (749 aa).

Over 1-20 (MEAETGSTMETGKGTNRGIR) the chain is Cytoplasmic. Residues 21–37 (IALALFIGGTLVLGTLL) traverse the membrane as a helical; Signal-anchor for type II membrane protein segment. Residues 38-749 (FLVSQGLLSF…NRGADSCRLW (712 aa)) lie on the Extracellular side of the membrane. Residues 53 to 749 (YCLKPECIEA…NRGADSCRLW (697 aa)) form the Peptidase M13 domain. Residues Cys-54 and Cys-59 are joined by a disulfide bond. Residues Asn-71, Asn-238, Asn-263, Asn-290, Asn-301, Asn-377, and Asn-484 are each glycosylated (N-linked (GlcNAc...) asparagine). 4 cysteine pairs are disulfide-bonded: Cys-77–Cys-733, Cys-85–Cys-693, Cys-142–Cys-406, and Cys-617–Cys-746. Residue His-580 coordinates Zn(2+). Residue Glu-581 is part of the active site. Positions 584 and 642 each coordinate Zn(2+). Asp-646 (proton donor) is an active-site residue. Asn-736 is a glycosylation site (N-linked (GlcNAc...) asparagine).

Belongs to the peptidase M13 family. In terms of assembly, interacts with MEPE; the interaction is zinc-dependent (via ASARM motif). Zn(2+) serves as cofactor. N-glycosylated. In terms of tissue distribution, expressed in bone, specifically in the osteoid and in osteocytes. Expressed in teeth, specifically in odontoblasts and ameloblasts. Expressed moderately by macrophages in the liver and has minimal expression in brown adipose tissue. Also expressed in suprabasal layers of the skin.

Its subcellular location is the cell membrane. In terms of biological role, peptidase that cleaves SIBLING (small integrin-binding ligand, N-linked glycoprotein)-derived ASARM peptides, thus regulating their biological activity. Cleaves ASARM peptides between Ser and Glu or Asp residues. Regulates osteogenic cell differentiation and bone mineralization through the cleavage of the MEPE-derived ASARM peptide. Promotes dentin mineralization and renal phosphate reabsorption by cleaving DMP1- and MEPE-derived ASARM peptides. Inhibits the cleavage of MEPE by CTSB/cathepsin B thus preventing MEPE degradation. The protein is Phosphate-regulating neutral endopeptidase PHEX (Phex) of Mus musculus (Mouse).